Consider the following 228-residue polypeptide: Phosphoglycolate phosphatase (228 aa).

The Nucleophile role is filled by aspartate 12. Mg(2+)-binding residues include aspartate 12, aspartate 14, and aspartate 177.

The protein belongs to the HAD-like hydrolase superfamily. CbbY/CbbZ/Gph/YieH family. Mg(2+) is required as a cofactor.

It carries out the reaction 2-phosphoglycolate + H2O = glycolate + phosphate. It participates in organic acid metabolism; glycolate biosynthesis; glycolate from 2-phosphoglycolate: step 1/1. Functionally, specifically catalyzes the dephosphorylation of 2-phosphoglycolate. Is involved in the dissimilation of the intracellular 2-phosphoglycolate formed during the DNA repair of 3'-phosphoglycolate ends, a major class of DNA lesions induced by oxidative stress. The sequence is that of Phosphoglycolate phosphatase from Vibrio vulnificus (strain YJ016).